A 363-amino-acid chain; its full sequence is Aminomethyltransferase (363 aa).

It belongs to the GcvT family. As to quaternary structure, the glycine cleavage system is composed of four proteins: P, T, L and H.

It catalyses the reaction N(6)-[(R)-S(8)-aminomethyldihydrolipoyl]-L-lysyl-[protein] + (6S)-5,6,7,8-tetrahydrofolate = N(6)-[(R)-dihydrolipoyl]-L-lysyl-[protein] + (6R)-5,10-methylene-5,6,7,8-tetrahydrofolate + NH4(+). In terms of biological role, the glycine cleavage system catalyzes the degradation of glycine. The chain is Aminomethyltransferase from Saccharophagus degradans (strain 2-40 / ATCC 43961 / DSM 17024).